The primary structure comprises 267 residues: Protein LicA (267 aa).

It belongs to the peptidase S49 family.

In terms of biological role, mediates phase variation of the LPS epitopes. Phase variation of H.influenza LPS epitopes expressed by LicA is determined by a translational switch. In Haemophilus influenzae (strain ATCC 51907 / DSM 11121 / KW20 / Rd), this protein is Protein LicA (licA).